The chain runs to 637 residues: ATP-dependent zinc metalloprotease FtsH (637 aa).

The Cytoplasmic segment spans residues 1 to 7 (MNRVFRN). The helical transmembrane segment at 8-28 (TIFYLLILLVVIGVVSYFQTS) threads the bilayer. Topologically, residues 29 to 109 (NPKTENMSYS…VEPAQETSGW (81 aa)) are extracellular. Residues 110–130 (VTFLTTIIPFVIIFILFFFLL) form a helical membrane-spanning segment. The Cytoplasmic portion of the chain corresponds to 131–637 (NQAQGGGSRV…TEEKKDDTKE (507 aa)). Residue 201 to 208 (GPPGTGKT) participates in ATP binding. His423 is a Zn(2+) binding site. Glu424 is an active-site residue. Zn(2+)-binding residues include His427 and Asp499. The tract at residues 514 to 637 (FGMSEKLGPL…TEEKKDDTKE (124 aa)) is not necessary for FtsH function.

The protein in the central section; belongs to the AAA ATPase family. In the C-terminal section; belongs to the peptidase M41 family. In terms of assembly, homohexamer. Interacts with FloT at midcell. Interacts with FloA at midcell. Another study shows only minor colocalization with FloA or FloT. Zn(2+) serves as cofactor.

The protein localises to the cell membrane. Its subcellular location is the membrane raft. Functionally, acts as a processive, ATP-dependent zinc metallopeptidase for both cytoplasmic and membrane proteins. Plays a role in the quality control of integral membrane proteins. In terms of biological role, in vitro partially degrades Spo0E, the phosphatase that acts on Spo0A-P. Recognition requires the last 14 residues of Spo0E. Its stabile accumulation requires FlotA and Flot. May degrade EzrA. The chain is ATP-dependent zinc metalloprotease FtsH from Bacillus subtilis (strain 168).